We begin with the raw amino-acid sequence, 209 residues long: Imidazole glycerol phosphate synthase subunit HisH (209 aa).

The Glutamine amidotransferase type-1 domain maps to 3–209 (SVAVIDYGMG…ANFLTWNGVS (207 aa)). The active-site Nucleophile is the cysteine 82. Residues histidine 187 and glutamate 189 contribute to the active site.

As to quaternary structure, heterodimer of HisH and HisF.

Its subcellular location is the cytoplasm. It catalyses the reaction 5-[(5-phospho-1-deoxy-D-ribulos-1-ylimino)methylamino]-1-(5-phospho-beta-D-ribosyl)imidazole-4-carboxamide + L-glutamine = D-erythro-1-(imidazol-4-yl)glycerol 3-phosphate + 5-amino-1-(5-phospho-beta-D-ribosyl)imidazole-4-carboxamide + L-glutamate + H(+). The enzyme catalyses L-glutamine + H2O = L-glutamate + NH4(+). It functions in the pathway amino-acid biosynthesis; L-histidine biosynthesis; L-histidine from 5-phospho-alpha-D-ribose 1-diphosphate: step 5/9. In terms of biological role, IGPS catalyzes the conversion of PRFAR and glutamine to IGP, AICAR and glutamate. The HisH subunit catalyzes the hydrolysis of glutamine to glutamate and ammonia as part of the synthesis of IGP and AICAR. The resulting ammonia molecule is channeled to the active site of HisF. The protein is Imidazole glycerol phosphate synthase subunit HisH of Nitrosococcus oceani (strain ATCC 19707 / BCRC 17464 / JCM 30415 / NCIMB 11848 / C-107).